The chain runs to 251 residues: Probable transcriptional regulatory protein SYO3AOP1_0685 (251 aa).

The protein belongs to the TACO1 family.

It is found in the cytoplasm. This is Probable transcriptional regulatory protein SYO3AOP1_0685 from Sulfurihydrogenibium sp. (strain YO3AOP1).